A 920-amino-acid chain; its full sequence is Vacuolar membrane protease (920 aa).

Topologically, residues 1–20 (MASSRAQRFNPIAFTPWPVT) are cytoplasmic. The chain crosses the membrane as a helical span at residues 21–41 (CITTIVYLALLIPILVINLVV). Residues 42 to 378 (PSAPETNPKG…AFAVFRLHTL (337 aa)) are Vacuolar-facing. Residues Asn-53, Asn-116, and Asn-119 are each glycosylated (N-linked (GlcNAc...) asparagine). Zn(2+) is bound by residues His-175 and Asp-187. Catalysis depends on Glu-221, which acts as the Proton acceptor. Zn(2+) is bound at residue Glu-222. Asn-238 carries N-linked (GlcNAc...) asparagine glycosylation. Zn(2+) contacts are provided by Glu-247 and His-306. Residues 379–399 (FAISVALLVIAPLVIFITSVI) traverse the membrane as a helical segment. Residues 400-433 (LSKTDRMYLFSMSKSLEGTGDQVSLRGLRGFSRT) lie on the Cytoplasmic side of the membrane. The helical transmembrane segment at 434–454 (PIILVIATTIPICLAYLLEKV) threads the bilayer. The Vacuolar portion of the chain corresponds to 455 to 463 (NPYIVHSSQ). A helical transmembrane segment spans residues 464–484 (FSVWSMMFSAWIFLAWFLACA). Over 485–495 (ADFFRPSALHR) the chain is Cytoplasmic. The helical transmembrane segment at 496–516 (AYSYTWIFVATWIMLVINTVY) threads the bilayer. Over 517-520 (ANQK) the chain is Vacuolar. The chain crosses the membrane as a helical span at residues 521–541 (GIAAGYFLLFYFAGAFLATWI). The Cytoplasmic portion of the chain corresponds to 542-659 (SYLELFALPR…TLPRWTWVLQ (118 aa)). The disordered stretch occupies residues 556–605 (ARQTTGRRPSSLSSRLLTSSADELRSNASPSTAEFPGAAGEDTDPTESTS). Residues 559-575 (TTGRRPSSLSSRLLTSS) show a composition bias toward low complexity. The helical transmembrane segment at 660 to 680 (LLLLAPIVLILVGQLALFLTA) threads the bilayer. Residues 681 to 693 (SMCQVGSDGVSTF) are Vacuolar-facing. Residues 694–714 (VVYLACAVFTTLLCIPLFPLI) traverse the membrane as a helical segment. Over 715–720 (HRFTYH) the chain is Cytoplasmic. A helical transmembrane segment spans residues 721 to 741 (IPTFLFLVFIGTLIYNLVAFP). Topologically, residues 742 to 920 (FSPANRLKTF…VEASHSFTIQ (179 aa)) are vacuolar. Residues Asn-760, Asn-788, and Asn-832 are each glycosylated (N-linked (GlcNAc...) asparagine).

This sequence belongs to the peptidase M28 family. The cofactor is Zn(2+).

Its subcellular location is the vacuole membrane. In terms of biological role, may be involved in vacuolar sorting and osmoregulation. The chain is Vacuolar membrane protease from Ajellomyces capsulatus (strain H143) (Darling's disease fungus).